We begin with the raw amino-acid sequence, 481 residues long: Ankyrin repeat, SAM and basic leucine zipper domain-containing protein 1 (481 aa).

Positions methionine 1–glutamate 16 are enriched in gly residues. The segment at methionine 1 to aspartate 23 is disordered. Phosphoserine is present on residues serine 17, serine 18, and serine 20. ANK repeat units lie at residues glutamate 45–serine 74, tyrosine 78–phenylalanine 107, aspartate 110–valine 144, arginine 148–threonine 177, asparagine 181–leucine 210, and aspartate 214–glycine 243. The region spanning serine 272–glutamate 334 is the SAM domain.

In terms of assembly, interacts with DDX4, PIWIL1, RANBP9 and TDRD1.

It is found in the cytoplasm. Plays a central role during spermatogenesis by repressing transposable elements and preventing their mobilization, which is essential for the germline integrity. Acts via the piRNA metabolic process, which mediates the repression of transposable elements during meiosis by forming complexes composed of piRNAs and Piwi proteins and governs the methylation and subsequent repression of transposons. Its association with pi-bodies suggests a participation in the primary piRNAs metabolic process. Required prior to the pachytene stage to facilitate the production of multiple types of piRNAs, including those associated with repeats involved in the regulation of retrotransposons. May act by mediating protein-protein interactions during germ cell maturation. The chain is Ankyrin repeat, SAM and basic leucine zipper domain-containing protein 1 (ASZ1) from Microcebus murinus (Gray mouse lemur).